The sequence spans 338 residues: Methionine synthase (338 aa).

Zn(2+) is bound by residues His211, Cys213, and Cys294.

This sequence belongs to the archaeal MetE family. Zn(2+) serves as cofactor.

It functions in the pathway amino-acid biosynthesis; L-methionine biosynthesis via de novo pathway. Its function is as follows. Catalyzes the transfer of a methyl group to L-homocysteine resulting in methionine formation. The physiological methyl donor is unknown. The protein is Methionine synthase of Sulfurisphaera tokodaii (strain DSM 16993 / JCM 10545 / NBRC 100140 / 7) (Sulfolobus tokodaii).